Reading from the N-terminus, the 568-residue chain is 2-succinyl-5-enolpyruvyl-6-hydroxy-3-cyclohexene-1-carboxylate synthase (568 aa).

It belongs to the TPP enzyme family. MenD subfamily. Homodimer. The cofactor is Mg(2+). Mn(2+) serves as cofactor. It depends on thiamine diphosphate as a cofactor.

It catalyses the reaction isochorismate + 2-oxoglutarate + H(+) = 5-enolpyruvoyl-6-hydroxy-2-succinyl-cyclohex-3-ene-1-carboxylate + CO2. It participates in quinol/quinone metabolism; 1,4-dihydroxy-2-naphthoate biosynthesis; 1,4-dihydroxy-2-naphthoate from chorismate: step 2/7. Its pathway is quinol/quinone metabolism; menaquinone biosynthesis. Catalyzes the thiamine diphosphate-dependent decarboxylation of 2-oxoglutarate and the subsequent addition of the resulting succinic semialdehyde-thiamine pyrophosphate anion to isochorismate to yield 2-succinyl-5-enolpyruvyl-6-hydroxy-3-cyclohexene-1-carboxylate (SEPHCHC). The sequence is that of 2-succinyl-5-enolpyruvyl-6-hydroxy-3-cyclohexene-1-carboxylate synthase from Actinobacillus pleuropneumoniae serotype 5b (strain L20).